The following is a 406-amino-acid chain: Serine hydroxymethyltransferase (406 aa).

Residues L111 and 115–117 (GHL) each bind (6S)-5,6,7,8-tetrahydrofolate. K220 is modified (N6-(pyridoxal phosphate)lysine). A (6S)-5,6,7,8-tetrahydrofolate-binding site is contributed by 340–342 (SAF).

Belongs to the SHMT family. Homodimer. The cofactor is pyridoxal 5'-phosphate.

It localises to the cytoplasm. The catalysed reaction is (6R)-5,10-methylene-5,6,7,8-tetrahydrofolate + glycine + H2O = (6S)-5,6,7,8-tetrahydrofolate + L-serine. The protein operates within one-carbon metabolism; tetrahydrofolate interconversion. It participates in amino-acid biosynthesis; glycine biosynthesis; glycine from L-serine: step 1/1. Its function is as follows. Catalyzes the reversible interconversion of serine and glycine with tetrahydrofolate (THF) serving as the one-carbon carrier. This reaction serves as the major source of one-carbon groups required for the biosynthesis of purines, thymidylate, methionine, and other important biomolecules. Also exhibits THF-independent aldolase activity toward beta-hydroxyamino acids, producing glycine and aldehydes, via a retro-aldol mechanism. The sequence is that of Serine hydroxymethyltransferase from Mycoplasma genitalium (strain ATCC 33530 / DSM 19775 / NCTC 10195 / G37) (Mycoplasmoides genitalium).